The sequence spans 254 residues: Proteasome subunit alpha (254 aa).

A disordered region spans residues 232–254 (PEVDSSESSNEAEAGAEKGSGES).

The protein belongs to the peptidase T1A family. As to quaternary structure, the 20S proteasome core is composed of 14 alpha and 14 beta subunits that assemble into four stacked heptameric rings, resulting in a barrel-shaped structure. The two inner rings, each composed of seven catalytic beta subunits, are sandwiched by two outer rings, each composed of seven alpha subunits. The catalytic chamber with the active sites is on the inside of the barrel. Has a gated structure, the ends of the cylinder being occluded by the N-termini of the alpha-subunits. Is capped by the proteasome-associated ATPase, ARC.

The protein resides in the cytoplasm. Its pathway is protein degradation; proteasomal Pup-dependent pathway. With respect to regulation, the formation of the proteasomal ATPase ARC-20S proteasome complex, likely via the docking of the C-termini of ARC into the intersubunit pockets in the alpha-rings, may trigger opening of the gate for substrate entry. Interconversion between the open-gate and close-gate conformations leads to a dynamic regulation of the 20S proteasome proteolysis activity. Its function is as follows. Component of the proteasome core, a large protease complex with broad specificity involved in protein degradation. The sequence is that of Proteasome subunit alpha from Mycolicibacterium vanbaalenii (strain DSM 7251 / JCM 13017 / BCRC 16820 / KCTC 9966 / NRRL B-24157 / PYR-1) (Mycobacterium vanbaalenii).